Consider the following 263-residue polypeptide: Purine nucleoside phosphorylase SE_0862 (263 aa).

Residues His-79, Cys-124, and His-141 each coordinate Zn(2+).

This sequence belongs to the purine nucleoside phosphorylase YfiH/LACC1 family. As to quaternary structure, homodimer. Cu(2+) is required as a cofactor. Requires Zn(2+) as cofactor.

It catalyses the reaction adenosine + phosphate = alpha-D-ribose 1-phosphate + adenine. The catalysed reaction is S-methyl-5'-thioadenosine + phosphate = 5-(methylsulfanyl)-alpha-D-ribose 1-phosphate + adenine. It carries out the reaction inosine + phosphate = alpha-D-ribose 1-phosphate + hypoxanthine. The enzyme catalyses adenosine + H2O + H(+) = inosine + NH4(+). Purine nucleoside enzyme that catalyzes the phosphorolysis of adenosine and inosine nucleosides, yielding D-ribose 1-phosphate and the respective free bases, adenine and hypoxanthine. Also catalyzes the phosphorolysis of S-methyl-5'-thioadenosine into adenine and S-methyl-5-thio-alpha-D-ribose 1-phosphate. Also has adenosine deaminase activity. The polypeptide is Purine nucleoside phosphorylase SE_0862 (Staphylococcus epidermidis (strain ATCC 12228 / FDA PCI 1200)).